Reading from the N-terminus, the 111-residue chain is uncharacterized protein (111 aa).

It to B.subtilis XkdW.

This is an uncharacterized protein from Bacillus subtilis (strain 168).